Here is a 187-residue protein sequence, read N- to C-terminus: MHCPFCRHPDSRVVDSRTTDDGTSIRRRRQCPDCSRRFTTVETCSLMVVKRSGVTEPFSRTKVINGVRKACQGRPVTEDALAQLGQRVEEAVRATGSAELTTHDVGLAILGPLRELDLVAYLRFASVYRAFDSLEDFEAAIAELREEQRERPAVDDEDHEDAGAERQGTDRGSGGTVEVPVPATVAD.

The segment at 3–34 (CPFCRHPDSRVVDSRTTDDGTSIRRRRQCPDC) is a zinc-finger region. Residues 46–136 (LMVVKRSGVT…VYRAFDSLED (91 aa)) form the ATP-cone domain. A disordered region spans residues 146-187 (EEQRERPAVDDEDHEDAGAERQGTDRGSGGTVEVPVPATVAD).

This sequence belongs to the NrdR family. Zn(2+) serves as cofactor.

Its function is as follows. Negatively regulates transcription of bacterial ribonucleotide reductase nrd genes and operons by binding to NrdR-boxes. The protein is Transcriptional repressor NrdR of Streptomyces avermitilis (strain ATCC 31267 / DSM 46492 / JCM 5070 / NBRC 14893 / NCIMB 12804 / NRRL 8165 / MA-4680).